The primary structure comprises 143 residues: Large ribosomal subunit protein uL13c (143 aa).

This sequence belongs to the universal ribosomal protein uL13 family. In terms of assembly, part of the 50S ribosomal subunit.

It is found in the plastid. It localises to the chloroplast. The polypeptide is Large ribosomal subunit protein uL13c (Gracilaria tenuistipitata var. liui (Red alga)).